Reading from the N-terminus, the 187-residue chain is Cytochrome c oxidase assembly protein CtaG (187 aa).

The Cytoplasmic segment spans residues 1–9; that stretch reads MSKKSNKNL. A helical; Signal-anchor for type II membrane protein membrane pass occupies residues 10 to 30; it reads AFSLLGLIISMVLLSFASVPI. Residues 31–187 are Periplasmic-facing; that stretch reads YNLFCKVTGY…IASLRGNTKY (157 aa).

It belongs to the COX11/CtaG family.

Its subcellular location is the cell inner membrane. Exerts its effect at some terminal stage of cytochrome c oxidase synthesis, probably by being involved in the insertion of the copper B into subunit I. This is Cytochrome c oxidase assembly protein CtaG from Rickettsia felis (strain ATCC VR-1525 / URRWXCal2) (Rickettsia azadi).